Reading from the N-terminus, the 320-residue chain is Malate dehydrogenase (320 aa).

NAD(+)-binding positions include G10–G15 and D34. The substrate site is built by R83 and R89. Residues N96 and I119–N121 each bind NAD(+). 2 residues coordinate substrate: N121 and R152. H176 functions as the Proton acceptor in the catalytic mechanism.

Belongs to the LDH/MDH superfamily. MDH type 3 family.

It catalyses the reaction (S)-malate + NAD(+) = oxaloacetate + NADH + H(+). In terms of biological role, catalyzes the reversible oxidation of malate to oxaloacetate. The protein is Malate dehydrogenase of Brucella abortus (strain S19).